The sequence spans 525 residues: Cytochrome P450 monooxygenase tpcC (525 aa).

The helical transmembrane segment at 13–33 (LPVTLVSLLVGSIFYFCYLTV) threads the bilayer. Cysteine 457 provides a ligand contact to heme.

It belongs to the cytochrome P450 family. The cofactor is heme.

The protein localises to the membrane. The protein operates within secondary metabolite biosynthesis; terpenoid biosynthesis. In terms of biological role, cytochrome P450 monooxygenase; part of the gene cluster that mediates the biosynthesis of terpestacin. The bifunctional terpene synthase tpcA converts isopentenyl diphosphate (IPP) and dimethylallyl diphosphate (DMAPP) into the sesterterpene preterpestacin I. The C-terminal prenyltransferase (PT) domain of tpcA catalyzes formation of GFPP, whereas the N-terminal terpene cyclase (TC) domain catalyzes the cyclization of GFPP into preterpestacin I. The cytochrome P450 monooxygenase tpcB then hydroxylates preterpestacin I to yield 24-hydroxypreterpstacin I (renamed as preterpestacin II) whereas the cytochrome P450 monooxygenase tpcC further hydroxylates preterpestacin II to yield 16,17-dihydroxypreterpestacin II (renamed as preterpestacin III). Finally, the FAD-dependent monooxygenase tpcD converts preterpestacin III into terpestacin. This is Cytochrome P450 monooxygenase tpcC from Cochliobolus heterostrophus (strain C5 / ATCC 48332 / race O) (Southern corn leaf blight fungus).